The primary structure comprises 466 residues: 3-isopropylmalate dehydratase large subunit (466 aa).

Residues C347, C407, and C410 each coordinate [4Fe-4S] cluster.

This sequence belongs to the aconitase/IPM isomerase family. LeuC type 1 subfamily. In terms of assembly, heterodimer of LeuC and LeuD. The cofactor is [4Fe-4S] cluster.

It carries out the reaction (2R,3S)-3-isopropylmalate = (2S)-2-isopropylmalate. Its pathway is amino-acid biosynthesis; L-leucine biosynthesis; L-leucine from 3-methyl-2-oxobutanoate: step 2/4. Catalyzes the isomerization between 2-isopropylmalate and 3-isopropylmalate, via the formation of 2-isopropylmaleate. This Enterobacter sp. (strain 638) protein is 3-isopropylmalate dehydratase large subunit.